Here is a 396-residue protein sequence, read N- to C-terminus: MAKEKFERNKPHVNVGTIGHVDHGKTTLTAALTRVCAEVWGGNAVAFDGIDNAPEERERGITIATSHVEYDSPTRHYAHVDCPGHADYVKNMITGAAQMDGAILVCSAADGPMPQTREHILLSRQVGVPYIVVFLNKADMVDDEELLELVEMEVRELLSDYDFPGDDTPIIKGSALKALEGDTSDIGMPAVQKLVETLDEYIPEPERAVDQPFLMPIEDVFSISGRGTVVTGRVERGIVKVGEEIEIVGIHDTTKTTCTGVEMFRKLLDEGRAGENVGVLLRGTKRDEVERGQVLAKPGSINPHTKFVAEVYVLSKDEGGRHTPFFNGYRPQFYFRTTDVTGACTLPEGTEMVMPGDNVQMDVELIAPIAMEDGLRFAIREGGRTVGAGVVAKITE.

The tr-type G domain maps to 10–206 (KPHVNVGTIG…TLDEYIPEPE (197 aa)). Residues 19-26 (GHVDHGKT) form a G1 region. 19–26 (GHVDHGKT) lines the GTP pocket. T26 provides a ligand contact to Mg(2+). The segment at 60–64 (GITIA) is G2. Residues 81 to 84 (DCPG) form a G3 region. Residues 81-85 (DCPGH) and 136-139 (NKAD) contribute to the GTP site. Positions 136–139 (NKAD) are G4. A G5 region spans residues 174-176 (SAL).

The protein belongs to the TRAFAC class translation factor GTPase superfamily. Classic translation factor GTPase family. EF-Tu/EF-1A subfamily. As to quaternary structure, monomer.

The protein resides in the cytoplasm. It carries out the reaction GTP + H2O = GDP + phosphate + H(+). Its function is as follows. GTP hydrolase that promotes the GTP-dependent binding of aminoacyl-tRNA to the A-site of ribosomes during protein biosynthesis. The chain is Elongation factor Tu from Alcanivorax borkumensis (strain ATCC 700651 / DSM 11573 / NCIMB 13689 / SK2).